Here is a 295-residue protein sequence, read N- to C-terminus: MLKPFVSITKPGIIFGNLISVAGGFFLASQGSVDGGLFLATVIGIALVIASGCVFNNYIDRDIDRLMERTQGRVTVQGLIPPGVTLAYGGVLGVAGFSVLWFGTNALATAFALLGFVVYVGLYSLYLKRHSIYGTLVGSLSGAAPPVVGYCAVSGQFDLGALTLLLIFCLWQMPHSYAIAIFRFHDYRAASIPVLPVERGVRAAKHHIFWYILAFLGATLMLTLGGYAGYGYFAVAAAMGLYWLVMALRGYRAGDDQVWAKKVFIFSIFTITALSIMMSIDFQVTETEVLMTSLR.

Transmembrane regions (helical) follow at residues 8-28, 35-55, 83-103, 107-127, 132-152, 162-182, 208-228, 229-249, and 263-283; these read ITKP…FFLA, GGLF…GCVF, GVTL…LWFG, LATA…SLYL, IYGT…GYCA, LTLL…IAIF, IFWY…GGYA, GYGY…MALR, and VFIF…IDFQ.

The protein belongs to the UbiA prenyltransferase family. Protoheme IX farnesyltransferase subfamily.

Its subcellular location is the cell inner membrane. It catalyses the reaction heme b + (2E,6E)-farnesyl diphosphate + H2O = Fe(II)-heme o + diphosphate. The protein operates within porphyrin-containing compound metabolism; heme O biosynthesis; heme O from protoheme: step 1/1. Its function is as follows. Converts heme B (protoheme IX) to heme O by substitution of the vinyl group on carbon 2 of heme B porphyrin ring with a hydroxyethyl farnesyl side group. The polypeptide is Protoheme IX farnesyltransferase (Chromohalobacter salexigens (strain ATCC BAA-138 / DSM 3043 / CIP 106854 / NCIMB 13768 / 1H11)).